A 165-amino-acid polypeptide reads, in one-letter code: Protein C2-DOMAIN ABA-RELATED 8 (165 aa).

Met-1 bears the N-acetylmethionine mark. The 106-residue stretch at 1–106 folds into the C2 domain; the sequence is MENLVGLLRI…QGTDIQELTN (106 aa). Positions 21, 22, 27, 73, 74, 75, and 81 each coordinate Ca(2+).

The protein belongs to the plant CAR protein family. In terms of assembly, binds to PYR/PYL/RCAR abscisic acid intracellular receptors in an ABA-independent manner, both at the plasma membrane and in the nucleus.

The protein resides in the cell membrane. Its subcellular location is the nucleus. Stimulates the GTPase/ATPase activities of Obg-like ATPases. Mediates the transient calcium-dependent interaction of PYR/PYL/RCAR abscisic acid (ABA) receptors with the plasma membrane and thus regulates ABA sensitivity. The protein is Protein C2-DOMAIN ABA-RELATED 8 of Arabidopsis thaliana (Mouse-ear cress).